The following is a 199-amino-acid chain: Small ribosomal subunit protein uS7 (199 aa).

This sequence belongs to the universal ribosomal protein uS7 family. Part of the 30S ribosomal subunit.

In terms of biological role, one of the primary rRNA binding proteins, it binds directly to 16S rRNA where it nucleates assembly of the head domain of the 30S subunit. Is located at the subunit interface close to the decoding center. The chain is Small ribosomal subunit protein uS7 from Cenarchaeum symbiosum (strain A).